A 465-amino-acid chain; its full sequence is UDP-N-acetylmuramate--L-alanine ligase (465 aa).

An ATP-binding site is contributed by 112 to 118 (GTHGKTT).

The protein belongs to the MurCDEF family.

It is found in the cytoplasm. The enzyme catalyses UDP-N-acetyl-alpha-D-muramate + L-alanine + ATP = UDP-N-acetyl-alpha-D-muramoyl-L-alanine + ADP + phosphate + H(+). It functions in the pathway cell wall biogenesis; peptidoglycan biosynthesis. Cell wall formation. The sequence is that of UDP-N-acetylmuramate--L-alanine ligase from Janthinobacterium sp. (strain Marseille) (Minibacterium massiliensis).